A 246-amino-acid polypeptide reads, in one-letter code: Bis(5'-nucleosyl)-tetraphosphatase PrpE [asymmetrical] (246 aa).

The protein belongs to the PrpE family. Ni(2+) serves as cofactor.

The catalysed reaction is P(1),P(4)-bis(5'-guanosyl) tetraphosphate + H2O = GMP + GTP + 2 H(+). Its function is as follows. Asymmetrically hydrolyzes Ap4p to yield AMP and ATP. The chain is Bis(5'-nucleosyl)-tetraphosphatase PrpE [asymmetrical] from Bacillus cereus (strain Q1).